We begin with the raw amino-acid sequence, 90 residues long: uncharacterized protein (90 aa).

Helical transmembrane passes span 23-43 (ITTI…VGLF) and 48-68 (VTLL…IIGF).

It is found in the cell membrane. This is an uncharacterized protein from Rickettsia prowazekii (strain Madrid E).